Here is a 396-residue protein sequence, read N- to C-terminus: F-box protein pof13 (396 aa).

One can recognise an F-box domain in the interval 40–89 (KNSNLFLLNRDIWSLIINYLDAFDILRLMHSSRQFYYWLRKSAVDECCFN).

Part of a SCF (SKP1-cullin-F-box) protein ligase complex. Interacts with skp1.

The protein resides in the cytoplasm. It participates in protein modification; protein ubiquitination. In Schizosaccharomyces pombe (strain 972 / ATCC 24843) (Fission yeast), this protein is F-box protein pof13 (pof13).